The sequence spans 600 residues: 69 kDa paraflagellar rod protein (600 aa).

Positions 335–355 (DKQDEAWRRIQELERVLQRLG) are calmodulin-binding.

As to quaternary structure, heterodimer of a 69 kDa and a 73 kDa protein.

The protein resides in the cell projection. It localises to the cilium. Its subcellular location is the flagellum. It is found in the cytoplasm. The protein localises to the cytoskeleton. Functionally, major component of the paraflagellar rod (PFR). The PFR is a highly ordered lattices of fibrous proteins that are located inside the flagellum and assume a fixed orientation with respect to the microtubular axoneme. The polypeptide is 69 kDa paraflagellar rod protein (PFRA) (Trypanosoma brucei brucei).